The primary structure comprises 279 residues: Putative pyruvate, phosphate dikinase regulatory protein (279 aa).

Position 153-160 (153-160) interacts with ADP; the sequence is GISRTSKT.

It belongs to the pyruvate, phosphate/water dikinase regulatory protein family. PDRP subfamily.

The enzyme catalyses N(tele)-phospho-L-histidyl/L-threonyl-[pyruvate, phosphate dikinase] + ADP = N(tele)-phospho-L-histidyl/O-phospho-L-threonyl-[pyruvate, phosphate dikinase] + AMP + H(+). It catalyses the reaction N(tele)-phospho-L-histidyl/O-phospho-L-threonyl-[pyruvate, phosphate dikinase] + phosphate + H(+) = N(tele)-phospho-L-histidyl/L-threonyl-[pyruvate, phosphate dikinase] + diphosphate. Its function is as follows. Bifunctional serine/threonine kinase and phosphorylase involved in the regulation of the pyruvate, phosphate dikinase (PPDK) by catalyzing its phosphorylation/dephosphorylation. This chain is Putative pyruvate, phosphate dikinase regulatory protein, found in Brucella abortus (strain 2308).